A 327-amino-acid chain; its full sequence is tRNA uridine(34) hydroxylase (327 aa).

The 95-residue stretch at 130–224 (LDEDTVVLDT…YGKDPEVQGE (95 aa)) folds into the Rhodanese domain. The active-site Cysteine persulfide intermediate is the Cys184.

It belongs to the TrhO family.

It catalyses the reaction uridine(34) in tRNA + AH2 + O2 = 5-hydroxyuridine(34) in tRNA + A + H2O. In terms of biological role, catalyzes oxygen-dependent 5-hydroxyuridine (ho5U) modification at position 34 in tRNAs. In Streptococcus thermophilus (strain ATCC BAA-250 / LMG 18311), this protein is tRNA uridine(34) hydroxylase.